A 119-amino-acid chain; its full sequence is Ribonuclease P protein component (119 aa).

The protein belongs to the RnpA family. As to quaternary structure, consists of a catalytic RNA component (M1 or rnpB) and a protein subunit.

It carries out the reaction Endonucleolytic cleavage of RNA, removing 5'-extranucleotides from tRNA precursor.. RNaseP catalyzes the removal of the 5'-leader sequence from pre-tRNA to produce the mature 5'-terminus. It can also cleave other RNA substrates such as 4.5S RNA. The protein component plays an auxiliary but essential role in vivo by binding to the 5'-leader sequence and broadening the substrate specificity of the ribozyme. The chain is Ribonuclease P protein component from Streptococcus equi subsp. zooepidemicus (strain MGCS10565).